The sequence spans 102 residues: Large ribosomal subunit protein bL21 (102 aa).

Residues 79–91 are compositionally biased toward basic residues; sequence RKDSKRKKGHRQP. The interval 79-102 is disordered; that stretch reads RKDSKRKKGHRQPYTKLTIDKINA.

It belongs to the bacterial ribosomal protein bL21 family. Part of the 50S ribosomal subunit. Contacts protein L20.

In terms of biological role, this protein binds to 23S rRNA in the presence of protein L20. This Staphylococcus carnosus (strain TM300) protein is Large ribosomal subunit protein bL21.